A 537-amino-acid chain; its full sequence is Phosphoenolpyruvate carboxykinase (ATP) (537 aa).

3 residues coordinate substrate: Arg-61, Tyr-195, and Lys-201. Residues Lys-201, His-220, and 236–244 (GLSGTGKTT) contribute to the ATP site. Mn(2+) contacts are provided by Lys-201 and His-220. Asp-257 is a Mn(2+) binding site. Glu-285, Arg-323, and Thr-448 together coordinate ATP. Arg-323 serves as a coordination point for substrate.

The protein belongs to the phosphoenolpyruvate carboxykinase (ATP) family. Requires Mn(2+) as cofactor.

It is found in the cytoplasm. The enzyme catalyses oxaloacetate + ATP = phosphoenolpyruvate + ADP + CO2. Its pathway is carbohydrate biosynthesis; gluconeogenesis. Involved in the gluconeogenesis. Catalyzes the conversion of oxaloacetate (OAA) to phosphoenolpyruvate (PEP) through direct phosphoryl transfer between the nucleoside triphosphate and OAA. In Rhodopseudomonas palustris (strain BisA53), this protein is Phosphoenolpyruvate carboxykinase (ATP).